We begin with the raw amino-acid sequence, 488 residues long: Aspartyl/glutamyl-tRNA(Asn/Gln) amidotransferase subunit B (488 aa).

This sequence belongs to the GatB/GatE family. GatB subfamily. As to quaternary structure, heterotrimer of A, B and C subunits.

The catalysed reaction is L-glutamyl-tRNA(Gln) + L-glutamine + ATP + H2O = L-glutaminyl-tRNA(Gln) + L-glutamate + ADP + phosphate + H(+). It catalyses the reaction L-aspartyl-tRNA(Asn) + L-glutamine + ATP + H2O = L-asparaginyl-tRNA(Asn) + L-glutamate + ADP + phosphate + 2 H(+). Its function is as follows. Allows the formation of correctly charged Asn-tRNA(Asn) or Gln-tRNA(Gln) through the transamidation of misacylated Asp-tRNA(Asn) or Glu-tRNA(Gln) in organisms which lack either or both of asparaginyl-tRNA or glutaminyl-tRNA synthetases. The reaction takes place in the presence of glutamine and ATP through an activated phospho-Asp-tRNA(Asn) or phospho-Glu-tRNA(Gln). This chain is Aspartyl/glutamyl-tRNA(Asn/Gln) amidotransferase subunit B, found in Chlamydia trachomatis serovar L2 (strain ATCC VR-902B / DSM 19102 / 434/Bu).